The following is a 366-amino-acid chain: tRNA/tmRNA (uracil-C(5))-methyltransferase (366 aa).

Residues glutamine 190, tyrosine 218, asparagine 223, glutamate 239, and aspartate 299 each contribute to the S-adenosyl-L-methionine site. Cysteine 324 serves as the catalytic Nucleophile. Glutamate 358 serves as the catalytic Proton acceptor.

It belongs to the class I-like SAM-binding methyltransferase superfamily. RNA M5U methyltransferase family. TrmA subfamily.

The catalysed reaction is uridine(54) in tRNA + S-adenosyl-L-methionine = 5-methyluridine(54) in tRNA + S-adenosyl-L-homocysteine + H(+). It carries out the reaction uridine(341) in tmRNA + S-adenosyl-L-methionine = 5-methyluridine(341) in tmRNA + S-adenosyl-L-homocysteine + H(+). In terms of biological role, dual-specificity methyltransferase that catalyzes the formation of 5-methyluridine at position 54 (m5U54) in all tRNAs, and that of position 341 (m5U341) in tmRNA (transfer-mRNA). This chain is tRNA/tmRNA (uracil-C(5))-methyltransferase, found in Edwardsiella ictaluri (strain 93-146).